A 140-amino-acid chain; its full sequence is uncharacterized protein (140 aa).

Residues 21-42 (CPYCNYTNADVKAIKKHIKSKH) form a C2H2-type zinc finger.

It to M.jannaschii MJECL27.

This is an uncharacterized protein from Methanocaldococcus jannaschii (strain ATCC 43067 / DSM 2661 / JAL-1 / JCM 10045 / NBRC 100440) (Methanococcus jannaschii).